The primary structure comprises 89 residues: Small ribosomal subunit protein uS15 (89 aa).

The span at 1–21 (MALTTEEKKQVLSEYGLHETD) shows a compositional bias: basic and acidic residues. A disordered region spans residues 1–24 (MALTTEEKKQVLSEYGLHETDTGS).

Belongs to the universal ribosomal protein uS15 family. In terms of assembly, part of the 30S ribosomal subunit. Forms a bridge to the 50S subunit in the 70S ribosome, contacting the 23S rRNA.

Its function is as follows. One of the primary rRNA binding proteins, it binds directly to 16S rRNA where it helps nucleate assembly of the platform of the 30S subunit by binding and bridging several RNA helices of the 16S rRNA. In terms of biological role, forms an intersubunit bridge (bridge B4) with the 23S rRNA of the 50S subunit in the ribosome. The protein is Small ribosomal subunit protein uS15 of Rhodococcus opacus (strain B4).